We begin with the raw amino-acid sequence, 75 residues long: UPF0729 protein C18orf32 homolog (75 aa).

The segment at 1-37 (MVCIPCIVIPVLLWVYKRFLEPVLYPIISPIISRFWR) is necessary for its localzation to the endoplasmic reticulum and lipid droplets. Over residues 43–65 (DTPQQKTSTAECNGAANGSTANG) the composition is skewed to polar residues. The disordered stretch occupies residues 43 to 75 (DTPQQKTSTAECNGAANGSTANGPKTVADKKAD).

This sequence belongs to the UPF0729 family.

The protein resides in the endoplasmic reticulum. It localises to the lipid droplet. This Danio rerio (Zebrafish) protein is UPF0729 protein C18orf32 homolog.